A 193-amino-acid polypeptide reads, in one-letter code: Ribosomal RNA large subunit methyltransferase E (193 aa).

Glycine 49, phenylalanine 51, aspartate 69, aspartate 86, and aspartate 106 together coordinate S-adenosyl-L-methionine. Catalysis depends on lysine 146, which acts as the Proton acceptor.

It belongs to the class I-like SAM-binding methyltransferase superfamily. RNA methyltransferase RlmE family.

The protein localises to the cytoplasm. The catalysed reaction is uridine(2552) in 23S rRNA + S-adenosyl-L-methionine = 2'-O-methyluridine(2552) in 23S rRNA + S-adenosyl-L-homocysteine + H(+). Its function is as follows. Specifically methylates the uridine in position 2552 of 23S rRNA at the 2'-O position of the ribose in the fully assembled 50S ribosomal subunit. The polypeptide is Ribosomal RNA large subunit methyltransferase E (Brachyspira hyodysenteriae (strain ATCC 49526 / WA1)).